A 232-amino-acid chain; its full sequence is Peptidoglycan-recognition protein LB (232 aa).

Positions 1–15 (MTALGLVLLSMMGYS) are cleaved as a signal peptide. Residues 53 to 179 (APYVIIHHSY…RQVRDTECPG (127 aa)) enclose the N-acetylmuramoyl-L-alanine amidase domain. His59 contributes to the Zn(2+) binding site. Cys67 and Cys73 form a disulfide bridge. Zn(2+)-binding residues include His169 and Cys177. An N-linked (GlcNAc...) asparagine glycan is attached at Asn196. Positions 213-232 (HPQAAAPQKPHQSPPAAPKV) are disordered.

It belongs to the N-acetylmuramoyl-L-alanine amidase 2 family. In terms of assembly, monomer. Zn(2+) serves as cofactor. As to expression, widely expressed.

Its subcellular location is the secreted. The enzyme catalyses Hydrolyzes the link between N-acetylmuramoyl residues and L-amino acid residues in certain cell-wall glycopeptides.. N-acetylmuramyl-L-alanine amidase involved in innate immunity by degrading bacterial peptidoglycans (PGN). Probably plays a scavenger role by digesting biologically active PGN into biologically inactive fragments. Has no direct bacteriolytic activity. The protein is Peptidoglycan-recognition protein LB (PGRP-LB) of Drosophila melanogaster (Fruit fly).